A 154-amino-acid chain; its full sequence is Ascorbate-specific PTS system EIIA component (154 aa).

The 145-residue stretch at 6–150 folds into the PTS EIIA type-2 domain; that stretch reads SLAVNKSIRL…QEVLDLIDRT (145 aa). Catalysis depends on histidine 68, which acts as the Tele-phosphohistidine intermediate. Histidine 68 carries the phosphohistidine modification.

The protein localises to the cytoplasm. Functionally, the phosphoenolpyruvate-dependent sugar phosphotransferase system (sugar PTS), a major carbohydrate active transport system, catalyzes the phosphorylation of incoming sugar substrates concomitantly with their translocation across the cell membrane. The enzyme II UlaABC PTS system is involved in ascorbate transport. The sequence is that of Ascorbate-specific PTS system EIIA component (ulaC) from Shigella dysenteriae serotype 1 (strain Sd197).